The chain runs to 164 residues: MRLTSKGRYAVTAMLDVALHSQEGPVPLADISERQGISLSYLEQLFSRLRKNGLVASVRGPGGGYLLGKSANEIAVGMVISAVDESVDATRCQGREGCQGGDRCLTHTLWRDLSDRITDFLNNITLDELVNNKEVLDVADRQDADIRRTANGRIQETINVNLRA.

An HTH rrf2-type domain is found at 2–131 (RLTSKGRYAV…NNITLDELVN (130 aa)). A DNA-binding region (H-T-H motif) is located at residues 28 to 51 (LADISERQGISLSYLEQLFSRLRK). Residues Cys-92, Cys-98, and Cys-104 each coordinate [2Fe-2S] cluster.

Requires [2Fe-2S] cluster as cofactor.

Regulates the transcription of several operons and genes involved in the biogenesis of Fe-S clusters and Fe-S-containing proteins. In Pectobacterium carotovorum subsp. carotovorum (strain PC1), this protein is HTH-type transcriptional regulator IscR.